A 465-amino-acid chain; its full sequence is L-seryl-tRNA(Sec) selenium transferase (465 aa).

Lysine 294 is subject to N6-(pyridoxal phosphate)lysine.

This sequence belongs to the SelA family. It depends on pyridoxal 5'-phosphate as a cofactor.

It localises to the cytoplasm. It catalyses the reaction L-seryl-tRNA(Sec) + selenophosphate + H(+) = L-selenocysteinyl-tRNA(Sec) + phosphate. Its pathway is aminoacyl-tRNA biosynthesis; selenocysteinyl-tRNA(Sec) biosynthesis; selenocysteinyl-tRNA(Sec) from L-seryl-tRNA(Sec) (bacterial route): step 1/1. Converts seryl-tRNA(Sec) to selenocysteinyl-tRNA(Sec) required for selenoprotein biosynthesis. The chain is L-seryl-tRNA(Sec) selenium transferase (selA) from Desulfomicrobium baculatum (Desulfovibrio baculatus).